Consider the following 647-residue polypeptide: A-type voltage-gated potassium channel KCND1 (647 aa).

Residues 1 to 183 (MAAGVATWLP…RAFENPHTST (183 aa)) lie on the Cytoplasmic side of the membrane. Positions 2–20 (AAGVATWLPFARAAAVGWL) are interaction with KCNIP1, KCNIP2, and other family members. Residues H104, C131, and C132 each coordinate Zn(2+). A disordered region spans residues 144–164 (AQRLAEDEEAEQTGDGPALPA). A helical transmembrane segment spans residues 184 to 205 (AALVFYYVTGFFIAVSVIANVV). Residues 206-230 (ETIPCRGPARRPPREQPCGDRFPLA) are Extracellular-facing. Residues 231 to 252 (FFCMDTACVLIFTGEYLLRLFA) form a helical membrane-spanning segment. Over 253 to 263 (APSRCRFLRSV) the chain is Cytoplasmic. The helical transmembrane segment at 264–284 (MSLIDVVAILPYYIGLLVPKN) threads the bilayer. The Extracellular segment spans residues 285-287 (EDV). The chain crosses the membrane as a helical; Voltage-sensor span at residues 288–308 (SGAFVTLRVFRVFRIFKFSRH). At 309–323 (SQGLRILGYTLKSCA) the chain is on the cytoplasmic side. An S4-S5 linker region spans residues 310–323 (QGLRILGYTLKSCA). A helical transmembrane segment spans residues 324–345 (SELGFLLFSLTMAIIIFATVMF). Over 346–359 (YAEKGTSKTNFTSI) the chain is Extracellular. Positions 360–371 (PAAFWYTIVTMT) form an intramembrane region, helical. The Selectivity filter motif lies at 372-377 (TLGYGD). The stretch at 372 to 379 (TLGYGDMV) is an intramembrane region. Residues 380–386 (PSTIAGK) are Extracellular-facing. The helical transmembrane segment at 387-415 (IFGSICSLSGVLVIALPVPVIVSNFSRIY) threads the bilayer. Topologically, residues 416 to 647 (HQNQRADKRR…LPETVKISSL (232 aa)) are cytoplasmic. A required for dendritic targeting region spans residues 474 to 489 (FEQQHHHLLHCLEKTT). Over residues 510-520 (GRTSRSTSVSS) the composition is skewed to low complexity. Residues 510–531 (GRTSRSTSVSSQPVGPSSLLSS) are disordered. Polar residues predominate over residues 521 to 530 (QPVGPSSLLS). S555 bears the Phosphoserine mark. Disordered regions lie at residues 564–584 (GLRR…PHDS) and 601–634 (IPTP…RLGT).

Belongs to the potassium channel family. D (Shal) (TC 1.A.1.2) subfamily. Kv4.1/KCND1 sub-subfamily. As to quaternary structure, component of heteromultimeric potassium channels. Identified in potassium channel complexes containing KCND1, KCND2, KCND3, KCNIP1, KCNIP2, KCNIP3, KCNIP4, DPP6 and DPP10. In terms of tissue distribution, detected in carotid body chemoreceptor cells and in frontal cortex.

It is found in the cell membrane. The catalysed reaction is K(+)(in) = K(+)(out). In terms of biological role, A-type voltage-gated potassium channel that mediates transmembrane potassium transport in excitable membranes in the brain. Mediates A-type current I(SA) in suprachiasmatic nucleus (SCN) neurons. Exhibits a low-threshold A-type current with a hyperpolarized steady-state inactivation midpoint and the recovery process was steeply voltage-dependent, with recovery being markedly faster at more negative potentials. May regulates repetitive firing rates in the suprachiasmatic nucleus (SCN) neurons and circadian rhythms in neuronal excitability and behavior. Contributes to the regulation of the circadian rhythm of action potential firing in suprachiasmatic nucleus neurons, which regulates the circadian rhythm of locomotor activity. The regulatory subunit KCNIP1 modulates the kinetics of channel inactivation, increases the current amplitudes and accelerates recovery from inactivation, shifts activation in a depolarizing direction. The regulatory subunit DPP10 decreases the voltage sensitivity of the inactivation channel gating. This Oryctolagus cuniculus (Rabbit) protein is A-type voltage-gated potassium channel KCND1.